Here is a 187-residue protein sequence, read N- to C-terminus: Adenine phosphoribosyltransferase (187 aa).

It belongs to the purine/pyrimidine phosphoribosyltransferase family. Homodimer.

It localises to the cytoplasm. It catalyses the reaction AMP + diphosphate = 5-phospho-alpha-D-ribose 1-diphosphate + adenine. Its pathway is purine metabolism; AMP biosynthesis via salvage pathway; AMP from adenine: step 1/1. In terms of biological role, catalyzes a salvage reaction resulting in the formation of AMP, that is energically less costly than de novo synthesis. The chain is Adenine phosphoribosyltransferase from Yersinia pseudotuberculosis serotype O:3 (strain YPIII).